A 1705-amino-acid chain; its full sequence is MAQFGTPFGGNLDIWAITVEERAKHDQQFHGLKPTAGYITGDQARNFFLQSGLPQPVLAQIWALADMNNDGRMDQLEFSIAMKLIKLKLQGYPLPSILPSNMLKQPVAMPAAAVAGFGMSGIVGIPPLAAVAPVPMPSIPVVGMSPPLVSSVPTVPPLSNGAPAVIQSHPAFAHSATLPKSSSFGRSVAGSQINTKLQKAQSFDVPAPPLVVEWAVPSSSRLKYRQLFNSQDKTMSGNLTGPQARTILMQSSLPQSQLATIWNLSDIDQDGKLTAEEFILAMHLIDVAMSGQPLPPILPPEYIPPSFRRVRSGSGLSIMSSVSVDQRLPEEPEEEEPQNADKKLPVTFEDKKRENFERGNLELEKRRQALLEQQRKEQERLAQLERAEQERKERERQDQERKRQQDLEKQLEKQRELERQREEERRKEIERREAAKRELERQRQLEWERNRRQELLNQRNREQEDIVVLKAKKKTLEFELEALNDKKHQLEGKLQDIRCRLTTQRHEIESTNKSRELRIAEITHLQQQLQESQQLLGKMIPEKQSLNDQLKQVQQNSLHRDSLLTLKRALETKEIGRQQLRDQLDEVEKETRAKLQEIDVFNNQLKELRELYNKQQFQKQQDFETEKIKQKELERKTSELDKLKEEDKRRMLEHDKLWQDRVKQEEERYKFQDEEKEKREESIQKCEVEKKPEIQEKPNKPFHQPPEPGKLGGQIPWMNTEKAPLTINQGDVKVVYYRALYPFDARSHDEITIEPGDIIMVDESQTGEPGWLGGELKGKTGWFPANYAERMPESEFPSTTKPAAETTAKPTVHVAPSPVAPAAFTNTSTNSNNWADFSSTWPTNNTDKVESDNWDTWAAQPSLTVPSAGQHRQRSAFTPATVTGSSPSPVLGQGEKVEGLQAQALYPWRAKKDNHLNFNKNDVITVLEQQDMWWFGEVQGQKGWFPKSYVKLISGPLRKSTSIDSTSSESPASLKRVSSPAFKPAIQGEEYISMYTYESNEQGDLTFQQGDLIVVIKKDGDWWTGTVGEKTGVFPSNYVRPKDSEAAGSGGKTGSLGKKPEIAQVIASYAATGPEQLTLAPGQLILIRKKNPGGWWEGELQARGKKRQIGWFPANYVKLLSPGTNKSTPTEPPKPTSLPPTCQVIGMYDYIAQNDDELAFSKGQVINVLNKEDPDWWKGELNGHVGLFPSNYVKLTTDMDPSQQWCADLHLLDMLSPTERKRQGYIHELIVTEENYVSDLQLVTETFQKPLLESDLLTEKEVAMIFVNWKELIMCNIKLLKALRVRKKMSGEKMPVKMIGDILTAQLPHMQPYIRFCSCQLNGAALIQQKTDEVPEFKEFVKRLAMDPRCKGMPLSSFLLKPMQRVTRYPLIIKNIIENTPENHPDHSHLKQALEKAEELCSQVNEGVREKENSDRLEWIQGHVQCEGLSEQLVFNSVTNCLGPRKFLHSGKLYKAKSNKELYGFLFNDFLLLTQIIKPLGSSGNDKVFSPKSNLQYKMYKTPIFLNEVLVKLPTDPSGDEPIFHISHIDRVYTLRAESINERTAWVQKIKAASELYIETEKKKREKAYLVRSQRATGIGRLMVNIVEGIELKPCRTHGKSNPYCEITMGSQCHITKTIQDTLNPKWNSNCQFFIKDLEQDVLCITVFERDQFSPDDFLGRTEIRVADIKKDQGSKGPVTKCLLLHEVPTGEIVVRLDLQLFDEP.

2 consecutive EH domains span residues 21-109 and 220-309; these read ERAK…PVAM and SRLK…SFRR. EF-hand domains are found at residues 53–88 and 253–288; these read LPQP…IKLK and LPQS…IDVA. Ca(2+)-binding residues include aspartate 66, asparagine 68, aspartate 70, arginine 72, glutamate 77, aspartate 266, aspartate 268, aspartate 270, lysine 272, and glutamate 277. 3 disordered regions span residues 322 to 355, 386 to 433, and 668 to 708; these read VSVD…KREN, RAEQ…ERRE, and RYKF…PPEP. Positions 325–697 are KLERQ; it reads DQRLPEEPEE…VEKKPEIQEK (373 aa). Residues 339–355 show a composition bias toward basic and acidic residues; it reads NADKKLPVTFEDKKREN. Residues 350–687 adopt a coiled-coil conformation; it reads DKKRENFERG…KREESIQKCE (338 aa). The span at 668–699 shows a compositional bias: basic and acidic residues; it reads RYKFQDEEKEKREESIQKCEVEKKPEIQEKPN. Residues 732–793 enclose the SH3 1 domain; sequence VKVVYYRALY…PANYAERMPE (62 aa). Low complexity predominate over residues 823–833; it reads AFTNTSTNSNN. The tract at residues 823-851 is disordered; it reads AFTNTSTNSNNWADFSSTWPTNNTDKVES. The span at 834 to 846 shows a compositional bias: polar residues; that stretch reads WADFSSTWPTNNT. The SH3 2 domain maps to 897–955; the sequence is VEGLQAQALYPWRAKKDNHLNFNKNDVITVLEQQDMWWFGEVQGQKGWFPKSYVKLISG. The interval 959–978 is disordered; sequence KSTSIDSTSSESPASLKRVS. Low complexity predominate over residues 960-973; that stretch reads STSIDSTSSESPAS. SH3 domains lie at 986-1044, 1058-1122, and 1139-1198; these read IQGE…PKDS, KKPE…LLSP, and PPTC…LTTD. Positions 1088–1111 match the Bipartite nuclear localization signal; in isoform 2 motif; that stretch reads RKKNPGGWWEGELQARGKKRQIGW. The 187-residue stretch at 1221–1407 folds into the DH domain; the sequence is KRQGYIHELI…EELCSQVNEG (187 aa). Residues 1446 to 1555 form the PH domain; it reads KFLHSGKLYK…WVQKIKAASE (110 aa). The C2 domain maps to 1563-1679; it reads KKREKAYLVR…KKDQGSKGPV (117 aa). Aspartate 1651, serine 1654, and aspartate 1657 together coordinate Ca(2+).

Binds epn1 and epn2. Ca(2+) serves as cofactor.

Its subcellular location is the endomembrane system. The protein resides in the synapse. It localises to the synaptosome. The protein localises to the cell projection. It is found in the lamellipodium. Its subcellular location is the cell membrane. The protein resides in the membrane. It localises to the clathrin-coated pit. The protein localises to the recycling endosome. It is found in the cytoplasm. Its subcellular location is the nucleus envelope. Its function is as follows. Adapter protein that provides a link between the endocytic membrane traffic and the actin assembly machinery. Acts as a guanine nucleotide exchange factor (GEF) for cdc42, and thereby stimulates actin nucleation mediated by wasl and the arp2/3 complex. Involved in endocytosis of activated egfr, and probably also other growth factor receptors. The polypeptide is Intersectin-1 (itsn1) (Xenopus laevis (African clawed frog)).